Reading from the N-terminus, the 1874-residue chain is Protein TIC 214 (1874 aa).

The next 6 membrane-spanning stretches (helical) occupy residues I18–G38, F64–L84, P87–H107, L124–L144, V172–I192, and I221–I241. 2 disordered regions span residues E248 to V310 and K1567 to D1624. Residues G255–T268 show a composition bias toward acidic residues. 2 stretches are compositionally biased toward basic and acidic residues: residues D298–V310 and N1584–A1601.

It belongs to the TIC214 family. Part of the Tic complex.

It is found in the plastid. The protein resides in the chloroplast inner membrane. Functionally, involved in protein precursor import into chloroplasts. May be part of an intermediate translocation complex acting as a protein-conducting channel at the inner envelope. This Coffea arabica (Arabian coffee) protein is Protein TIC 214.